Reading from the N-terminus, the 1411-residue chain is DNA-directed RNA polymerase subunit beta' (1411 aa).

Residues cysteine 69, cysteine 71, cysteine 84, and cysteine 87 each coordinate Zn(2+). Residues aspartate 461, aspartate 463, and aspartate 465 each contribute to the Mg(2+) site. The Zn(2+) site is built by cysteine 809, cysteine 883, cysteine 890, and cysteine 893.

It belongs to the RNA polymerase beta' chain family. In terms of assembly, the RNAP catalytic core consists of 2 alpha, 1 beta, 1 beta' and 1 omega subunit. When a sigma factor is associated with the core the holoenzyme is formed, which can initiate transcription. The cofactor is Mg(2+). Zn(2+) is required as a cofactor.

It catalyses the reaction RNA(n) + a ribonucleoside 5'-triphosphate = RNA(n+1) + diphosphate. DNA-dependent RNA polymerase catalyzes the transcription of DNA into RNA using the four ribonucleoside triphosphates as substrates. In Ehrlichia ruminantium (strain Welgevonden), this protein is DNA-directed RNA polymerase subunit beta'.